Here is a 172-residue protein sequence, read N- to C-terminus: Large ribosomal subunit protein bL17 (172 aa).

The span at 140-160 (LKAEAKAKREEKKPAKKEEKP) shows a compositional bias: basic and acidic residues. Residues 140–172 (LKAEAKAKREEKKPAKKEEKPKKAKKEKAAASN) are disordered.

It belongs to the bacterial ribosomal protein bL17 family. In terms of assembly, part of the 50S ribosomal subunit. Contacts protein L32.

This Leptospira biflexa serovar Patoc (strain Patoc 1 / Ames) protein is Large ribosomal subunit protein bL17.